The following is a 165-amino-acid chain: Ubiquitin-fold modifier-conjugating enzyme 1 (165 aa).

Cysteine 116 functions as the Glycyl thioester intermediate in the catalytic mechanism.

It belongs to the ubiquitin-conjugating enzyme family. UFC1 subfamily.

Its function is as follows. E2-like enzyme which forms an intermediate with UFM1 via a thioester linkage. The protein is Ubiquitin-fold modifier-conjugating enzyme 1 of Drosophila mojavensis (Fruit fly).